We begin with the raw amino-acid sequence, 215 residues long: ATP phosphoribosyltransferase (215 aa).

Belongs to the ATP phosphoribosyltransferase family. Short subfamily. As to quaternary structure, heteromultimer composed of HisG and HisZ subunits.

It is found in the cytoplasm. The enzyme catalyses 1-(5-phospho-beta-D-ribosyl)-ATP + diphosphate = 5-phospho-alpha-D-ribose 1-diphosphate + ATP. It participates in amino-acid biosynthesis; L-histidine biosynthesis; L-histidine from 5-phospho-alpha-D-ribose 1-diphosphate: step 1/9. In terms of biological role, catalyzes the condensation of ATP and 5-phosphoribose 1-diphosphate to form N'-(5'-phosphoribosyl)-ATP (PR-ATP). Has a crucial role in the pathway because the rate of histidine biosynthesis seems to be controlled primarily by regulation of HisG enzymatic activity. This chain is ATP phosphoribosyltransferase, found in Prochlorococcus marinus (strain MIT 9215).